Reading from the N-terminus, the 461-residue chain is MQDSMDDSLREAEGRQDDSEVSSGTTLGSSTPEDSGVTAKLRKKYQMASALLRRELEELSVYDAKTAGVSGRSSGSGSGGLALLGGRFHVAPLRIPARRRLQTLVVAWHTSSFIYMTVLVLFLAANPLMWWFMVPYMVYYVWNRSPANGGVVRRYSPRLRSLALWRYYCEYYPISLHKSEDLAPTFVPDPRGAEPREWKLRLWLWPTRVELLNLTLQWTRARPQVATGPRYIFGYHPHGVGALGAFGAIATEGCNWSKVFAGIPACLCTLVNQFQIPIYRDYLLGLGCTSVARKNVLKVLEQNYSVCIVVGGAQEALLSRVGSTELVLNKRKGFIKLALETGNVNLVPIYAFGETDCFNVLDTGNESYLRKFQLWIKKTYGFTIPFFFARGVFNYDFGFLPFRNPINVVVGKPVYVDKRRTNPTMEEIDHYHDLYVQELRNVFDKNKHKFGYAGKELKIVE.

The interval 1–38 (MQDSMDDSLREAEGRQDDSEVSSGTTLGSSTPEDSGVT) is disordered. Residues 1 to 112 (MQDSMDDSLR…TLVVAWHTSS (112 aa)) are Cytoplasmic-facing. Over residues 7 to 18 (DSLREAEGRQDD) the composition is skewed to basic and acidic residues. The span at 21-33 (VSSGTTLGSSTPE) shows a compositional bias: polar residues. The helical transmembrane segment at 113–133 (FIYMTVLVLFLAANPLMWWFM) threads the bilayer. The Lumenal portion of the chain corresponds to 134–230 (VPYMVYYVWN…ARPQVATGPR (97 aa)). The chain crosses the membrane as a helical span at residues 231 to 251 (YIFGYHPHGVGALGAFGAIAT). Residues 252-258 (EGCNWSK) lie on the Cytoplasmic side of the membrane. The helical transmembrane segment at 259–279 (VFAGIPACLCTLVNQFQIPIY) threads the bilayer. Residues 280-332 (RDYLLGLGCTSVARKNVLKVLEQNYSVCIVVGGAQEALLSRVGSTELVLNKRK) lie on the Lumenal side of the membrane. Residues 333–353 (GFIKLALETGNVNLVPIYAFG) traverse the membrane as a helical segment. Residues 354 to 461 (ETDCFNVLDT…YAGKELKIVE (108 aa)) lie on the Cytoplasmic side of the membrane.

This sequence belongs to the diacylglycerol acyltransferase family.

Its subcellular location is the lipid droplet. It is found in the endoplasmic reticulum membrane. It carries out the reaction an acyl-CoA + a 1,2-diacyl-sn-glycerol = a triacyl-sn-glycerol + CoA. It catalyses the reaction a 2-acylglycerol + an acyl-CoA = a 1,2-diacyl-sn-glycerol + CoA. The protein operates within glycerolipid metabolism; triacylglycerol biosynthesis. In terms of biological role, catalyzes the terminal and only committed step in triacylglycerol (TAG) synthesis by using diacylglycerol (DAG) and fatty acyl-CoA as substrates. Required for storage lipid synthesis. Major DAG esterifying enzyme in stationary phase when TAG production is particularly active. Involved in lipid particle synthesis from the endoplasmic reticulum, promoting localized TAG production at discrete ER subdomains. This is Diacylglycerol O-acyltransferase 1 (DGA1) from Eremothecium gossypii (strain ATCC 10895 / CBS 109.51 / FGSC 9923 / NRRL Y-1056) (Yeast).